The primary structure comprises 119 residues: Basic phospholipase A2 (119 aa).

Disulfide bonds link Cys11/Cys71, Cys27/Cys118, Cys29/Cys45, Cys44/Cys99, Cys51/Cys92, Cys60/Cys85, and Cys78/Cys90. Tyr28, Gly30, and Gly32 together coordinate Ca(2+). The active site involves His48. Asp49 lines the Ca(2+) pocket. Residue Asp93 is part of the active site.

The protein belongs to the phospholipase A2 family. Group I subfamily. D49 sub-subfamily. Ca(2+) serves as cofactor. In terms of tissue distribution, expressed by the venom gland.

Its subcellular location is the secreted. The catalysed reaction is a 1,2-diacyl-sn-glycero-3-phosphocholine + H2O = a 1-acyl-sn-glycero-3-phosphocholine + a fatty acid + H(+). Its function is as follows. Snake venom phospholipase A2 (PLA2) that has several activities. It is myotoxic, has weak anticoagulant activity and inhibits neuromuscular transmission by blocking acetylcholine release from the nerve termini. PLA2 catalyzes the calcium-dependent hydrolysis of the 2-acyl groups in 3-sn-phosphoglycerides. The sequence is that of Basic phospholipase A2 from Hydrophis schistosus (Beaked sea snake).